Consider the following 426-residue polypeptide: ATP-dependent Clp protease ATP-binding subunit ClpX (426 aa).

The ClpX-type ZB domain occupies 1 to 52; that stretch reads MNEIKKRCSFCNKEESLDNPIINSGITPDVYICNYCLIVGSEILTGYLNKNP. The Zn(2+) site is built by cysteine 8, cysteine 11, cysteine 33, and cysteine 36. An ATP-binding site is contributed by 129-136; sequence PTGSGKTL.

It belongs to the ClpX chaperone family. Component of the ClpX-ClpP complex. Forms a hexameric ring that, in the presence of ATP, binds to fourteen ClpP subunits assembled into a disk-like structure with a central cavity, resembling the structure of eukaryotic proteasomes.

ATP-dependent specificity component of the Clp protease. It directs the protease to specific substrates. Can perform chaperone functions in the absence of ClpP. The polypeptide is ATP-dependent Clp protease ATP-binding subunit ClpX (Helicobacter hepaticus (strain ATCC 51449 / 3B1)).